Reading from the N-terminus, the 294-residue chain is rRNA 2'-O-methyltransferase fibrillarin (294 aa).

A disordered region spans residues M1–G62. A compositionally biased stretch (gly residues) spans G20–G56. Residues R27, R47, and R61 each carry the asymmetric dimethylarginine modification. S-adenosyl-L-methionine is bound by residues T151–T152, E170–F171, D195–A196, and D215–Q218.

Belongs to the methyltransferase superfamily. Fibrillarin family. As to quaternary structure, component of box C/D small nucleolar ribonucleoprotein (snoRNP) particles. It is associated with the U3, U8 and U13 small nuclear RNAs. Post-translationally, by homology to other fibrillarins, some or all of the N-terminal domain arginines are modified to asymmetric dimethylarginine (DMA).

It localises to the nucleus. Its subcellular location is the nucleolus. It carries out the reaction L-glutaminyl-[histone H2A] + S-adenosyl-L-methionine = N(5)-methyl-L-glutaminyl-[histone H2A] + S-adenosyl-L-homocysteine + H(+). Functionally, S-adenosyl-L-methionine-dependent methyltransferase that has the ability to methylate both RNAs and proteins. Involved in pre-rRNA processing. Utilizes the methyl donor S-adenosyl-L-methionine to catalyze the site-specific 2'-hydroxyl methylation of ribose moieties in pre-ribosomal RNA. Site specificity is provided by a guide RNA that base pairs with the substrate. Methylation occurs at a characteristic distance from the sequence involved in base pairing with the guide RNA. Also acts as a protein methyltransferase by mediating methylation of 'Gln-105' of histone H2A (H2AQ105me), a modification that impairs binding of the FACT complex and is specifically present at 35S ribosomal DNA locus. This chain is rRNA 2'-O-methyltransferase fibrillarin (FIB), found in Tetrahymena thermophila.